The chain runs to 317 residues: Glucokinase (317 aa).

Position 6–12 (6–12 (GVDIGGT)) interacts with ATP.

The protein belongs to the ROK (NagC/XylR) family. As to quaternary structure, homooligomer (possibly a homotetramer). Alternatively, it may form a heterotetramer of two glucokinase subunits with two ORF2 (AC P40182) proteins.

It localises to the cytoplasm. It carries out the reaction D-glucose + ATP = D-glucose 6-phosphate + ADP + H(+). Functionally, a probable glucose kinase. Required for glucose repression of many different genes, restores glucose kinase activity in E.coli glk mutants. This chain is Glucokinase (glkA), found in Streptomyces coelicolor (strain ATCC BAA-471 / A3(2) / M145).